We begin with the raw amino-acid sequence, 101 residues long: Large ribosomal subunit protein bL21 (101 aa).

This sequence belongs to the bacterial ribosomal protein bL21 family. As to quaternary structure, part of the 50S ribosomal subunit. Contacts protein L20.

In terms of biological role, this protein binds to 23S rRNA in the presence of protein L20. This is Large ribosomal subunit protein bL21 from Sulfurovum sp. (strain NBC37-1).